Consider the following 129-residue polypeptide: Small ribosomal subunit protein uS9 (129 aa).

This sequence belongs to the universal ribosomal protein uS9 family.

The protein is Small ribosomal subunit protein uS9 of Helicobacter pylori (strain P12).